The sequence spans 614 residues: Bifunctional enzyme CysN/CysC (614 aa).

The segment at 1–441 (MTTLLRLATA…SLVTAQDRPP (441 aa)) is sulfate adenylyltransferase. The tr-type G domain maps to 2 to 217 (TTLLRLATAG…DVYIAGDRNM (216 aa)). The G1 stretch occupies residues 11-18 (GSVDDGKS). A GTP-binding site is contributed by 11 to 18 (GSVDDGKS). Residues 67–71 (GITID) are G2. The interval 88 to 91 (DTPG) is G3. Residues 88 to 92 (DTPGH) and 143 to 146 (NKMD) each bind GTP. The tract at residues 143–146 (NKMD) is G4. Residues 180–182 (SAL) are G5. Positions 442–614 (RGKTVWFTGL…EVIDLLESSS (173 aa)) are adenylyl-sulfate kinase. 450–457 (GLSGSGKS) serves as a coordination point for ATP. Serine 524 acts as the Phosphoserine intermediate in catalysis. The disordered stretch occupies residues 578–597 (GIDSPYQRPKNPDLRLTPDR). The segment covering 587 to 597 (KNPDLRLTPDR) has biased composition (basic and acidic residues).

It in the C-terminal section; belongs to the APS kinase family. This sequence in the N-terminal section; belongs to the TRAFAC class translation factor GTPase superfamily. Classic translation factor GTPase family. CysN/NodQ subfamily. As to quaternary structure, heterodimer composed of CysD, the smaller subunit, and CysNC.

It catalyses the reaction sulfate + ATP + H(+) = adenosine 5'-phosphosulfate + diphosphate. It carries out the reaction adenosine 5'-phosphosulfate + ATP = 3'-phosphoadenylyl sulfate + ADP + H(+). The protein operates within sulfur metabolism; hydrogen sulfide biosynthesis; sulfite from sulfate: step 1/3. It participates in sulfur metabolism; hydrogen sulfide biosynthesis; sulfite from sulfate: step 2/3. With CysD forms the ATP sulfurylase (ATPS) that catalyzes the adenylation of sulfate producing adenosine 5'-phosphosulfate (APS) and diphosphate, the first enzymatic step in sulfur assimilation pathway. APS synthesis involves the formation of a high-energy phosphoric-sulfuric acid anhydride bond driven by GTP hydrolysis by CysN coupled to ATP hydrolysis by CysD. In terms of biological role, APS kinase catalyzes the synthesis of activated sulfate. The chain is Bifunctional enzyme CysN/CysC (cysNC) from Mycobacterium tuberculosis (strain CDC 1551 / Oshkosh).